Reading from the N-terminus, the 354-residue chain is Long form salivary protein D7L3 (354 aa).

Positions 1 to 26 (MQLTPRSVHLVHLLLAATTLISPSWS) are cleaved as a signal peptide.

This sequence belongs to the PBP/GOBP family.

It is found in the secreted. Modulates blood feeding of female mosquitoes on vertebrate species by binding and sequestering different mediators involved in the host response. Binds serotonin with high affinity. Binds weakly noradrenaline and histamine. Does not bind tryptamine, octopamine, dopamine, adrenaline, leukotriene C4, leukotriene D4, leukotriene B4, ADP and U-46619, a stable analog of thromboxane A2. Inhibits agonist-induced platelet aggregation. Exhibits vasodilating activity. This chain is Long form salivary protein D7L3, found in Anopheles gambiae (African malaria mosquito).